The primary structure comprises 213 residues: Thiopurine S-methyltransferase (213 aa).

S-adenosyl-L-methionine-binding residues include Trp-10, Leu-46, Glu-67, and Arg-124.

It belongs to the class I-like SAM-binding methyltransferase superfamily. TPMT family.

Its subcellular location is the cytoplasm. The enzyme catalyses S-adenosyl-L-methionine + a thiopurine = S-adenosyl-L-homocysteine + a thiopurine S-methylether.. The protein is Thiopurine S-methyltransferase of Xanthobacter autotrophicus (strain ATCC BAA-1158 / Py2).